The following is a 445-amino-acid chain: Bifunctional protein GlmU (445 aa).

The tract at residues 1–218 is pyrophosphorylase; sequence MRALVLAAGK…LLEITGVNTR (218 aa). UDP-N-acetyl-alpha-D-glucosamine is bound by residues 6–9, lysine 20, glutamine 69, 74–75, 96–98, glycine 134, glutamate 147, asparagine 162, and asparagine 216; these read LAAG, GT, and YGD. Aspartate 98 is a Mg(2+) binding site. Asparagine 216 contributes to the Mg(2+) binding site. Residues 219-239 form a linker region; the sequence is KTLVWLEEQLRMRKIEELLEN. The interval 240–445 is N-acetyltransferase; the sequence is GVTILDPATT…GWVLKKRKEE (206 aa). Positions 321 and 339 each coordinate UDP-N-acetyl-alpha-D-glucosamine. Histidine 351 acts as the Proton acceptor in catalysis. UDP-N-acetyl-alpha-D-glucosamine is bound by residues tyrosine 354 and asparagine 365. Residues alanine 368, 374–375, serine 393, alanine 411, and arginine 428 contribute to the acetyl-CoA site; that span reads NY.

In the N-terminal section; belongs to the N-acetylglucosamine-1-phosphate uridyltransferase family. This sequence in the C-terminal section; belongs to the transferase hexapeptide repeat family. As to quaternary structure, homotrimer. The cofactor is Mg(2+).

The protein localises to the cytoplasm. The catalysed reaction is alpha-D-glucosamine 1-phosphate + acetyl-CoA = N-acetyl-alpha-D-glucosamine 1-phosphate + CoA + H(+). It catalyses the reaction N-acetyl-alpha-D-glucosamine 1-phosphate + UTP + H(+) = UDP-N-acetyl-alpha-D-glucosamine + diphosphate. It functions in the pathway nucleotide-sugar biosynthesis; UDP-N-acetyl-alpha-D-glucosamine biosynthesis; N-acetyl-alpha-D-glucosamine 1-phosphate from alpha-D-glucosamine 6-phosphate (route II): step 2/2. Its pathway is nucleotide-sugar biosynthesis; UDP-N-acetyl-alpha-D-glucosamine biosynthesis; UDP-N-acetyl-alpha-D-glucosamine from N-acetyl-alpha-D-glucosamine 1-phosphate: step 1/1. It participates in bacterial outer membrane biogenesis; LPS lipid A biosynthesis. Catalyzes the last two sequential reactions in the de novo biosynthetic pathway for UDP-N-acetylglucosamine (UDP-GlcNAc). The C-terminal domain catalyzes the transfer of acetyl group from acetyl coenzyme A to glucosamine-1-phosphate (GlcN-1-P) to produce N-acetylglucosamine-1-phosphate (GlcNAc-1-P), which is converted into UDP-GlcNAc by the transfer of uridine 5-monophosphate (from uridine 5-triphosphate), a reaction catalyzed by the N-terminal domain. This chain is Bifunctional protein GlmU, found in Thermotoga maritima (strain ATCC 43589 / DSM 3109 / JCM 10099 / NBRC 100826 / MSB8).